The primary structure comprises 255 residues: uncharacterized protein (255 aa).

The span at 1–10 (MSDSIHRRKV) shows a compositional bias: basic residues. Residues 1–78 (MSDSIHRRKV…SPMRGLPMEE (78 aa)) are disordered. A compositionally biased stretch (basic and acidic residues) spans 44 to 61 (VFERSFSEPSLNRHRDGQ).

This is an uncharacterized protein from Arabidopsis thaliana (Mouse-ear cress).